Reading from the N-terminus, the 340-residue chain is Delta-aminolevulinic acid dehydratase (340 aa).

Residues Cys134, Cys136, and Cys144 each contribute to the Zn(2+) site. Lys211 acts as the Schiff-base intermediate with substrate in catalysis. Residues Arg221 and Arg233 each contribute to the 5-aminolevulinate site. Lys264 functions as the Schiff-base intermediate with substrate in the catalytic mechanism. 5-aminolevulinate contacts are provided by Ser291 and Tyr330.

Belongs to the ALAD family. As to quaternary structure, homooctamer. Zn(2+) serves as cofactor.

The catalysed reaction is 2 5-aminolevulinate = porphobilinogen + 2 H2O + H(+). Its pathway is porphyrin-containing compound metabolism; protoporphyrin-IX biosynthesis; coproporphyrinogen-III from 5-aminolevulinate: step 1/4. Its function is as follows. Catalyzes an early step in the biosynthesis of tetrapyrroles. Binds two molecules of 5-aminolevulinate per subunit, each at a distinct site, and catalyzes their condensation to form porphobilinogen. The sequence is that of Delta-aminolevulinic acid dehydratase (HEM2) from Eremothecium gossypii (strain ATCC 10895 / CBS 109.51 / FGSC 9923 / NRRL Y-1056) (Yeast).